Reading from the N-terminus, the 269-residue chain is Putative pyruvate, phosphate dikinase regulatory protein (269 aa).

Residue 147-154 (GVSRSSKT) participates in ADP binding.

It belongs to the pyruvate, phosphate/water dikinase regulatory protein family. PDRP subfamily.

The enzyme catalyses N(tele)-phospho-L-histidyl/L-threonyl-[pyruvate, phosphate dikinase] + ADP = N(tele)-phospho-L-histidyl/O-phospho-L-threonyl-[pyruvate, phosphate dikinase] + AMP + H(+). It catalyses the reaction N(tele)-phospho-L-histidyl/O-phospho-L-threonyl-[pyruvate, phosphate dikinase] + phosphate + H(+) = N(tele)-phospho-L-histidyl/L-threonyl-[pyruvate, phosphate dikinase] + diphosphate. Its function is as follows. Bifunctional serine/threonine kinase and phosphorylase involved in the regulation of the pyruvate, phosphate dikinase (PPDK) by catalyzing its phosphorylation/dephosphorylation. In Trichlorobacter lovleyi (strain ATCC BAA-1151 / DSM 17278 / SZ) (Geobacter lovleyi), this protein is Putative pyruvate, phosphate dikinase regulatory protein.